Here is a 173-residue protein sequence, read N- to C-terminus: MIRKEVEEAPWWITETGVIISKKLKKPRKTFITPHGYEMIGYTHPKKGTQNYLVHRLVAKYFIYDIPKGMFVNHIDGNKLNNHVRNLEIVTPKENTLHAMKIGLMSGQPGESNSMSKLTNMEATNLIYDLIAGMNNVEAGEKYSLHPRYVSLIRHKRRWKTLWDRIERSTTIA.

A possible homing endonuclease, it is entirely encoded within the YosP intron. The polypeptide is SPbeta prophage-derived putative HNH homing endonuclease YosQ (yosQ) (Bacillus subtilis (strain 168)).